We begin with the raw amino-acid sequence, 166 residues long: Photosystem I assembly protein Ycf3 (166 aa).

TPR repeat units follow at residues 35–68 (AFTY…EIDP), 72–105 (SYIL…NPSL), and 120–153 (GEQA…APTN).

It belongs to the Ycf3 family.

The protein resides in the plastid. It is found in the chloroplast thylakoid membrane. Essential for the assembly of the photosystem I (PSI) complex. May act as a chaperone-like factor to guide the assembly of the PSI subunits. The sequence is that of Photosystem I assembly protein Ycf3 from Oltmannsiellopsis viridis (Marine flagellate).